The sequence spans 178 residues: Large ribosomal subunit protein uL6 (178 aa).

Belongs to the universal ribosomal protein uL6 family. Part of the 50S ribosomal subunit.

This protein binds to the 23S rRNA, and is important in its secondary structure. It is located near the subunit interface in the base of the L7/L12 stalk, and near the tRNA binding site of the peptidyltransferase center. This is Large ribosomal subunit protein uL6 from Arthrobacter sp. (strain FB24).